A 544-amino-acid chain; its full sequence is Methionine--tRNA ligase (544 aa).

The short motif at 10-20 (PYANGSLHLGH) is the 'HIGH' region element. Residues cysteine 141, cysteine 144, cysteine 153, and cysteine 156 each contribute to the Zn(2+) site. The 'KMSKS' region signature appears at 329–333 (KLSTS). Threonine 332 serves as a coordination point for ATP.

The protein belongs to the class-I aminoacyl-tRNA synthetase family. MetG type 1 subfamily. As to quaternary structure, monomer. It depends on Zn(2+) as a cofactor.

Its subcellular location is the cytoplasm. The enzyme catalyses tRNA(Met) + L-methionine + ATP = L-methionyl-tRNA(Met) + AMP + diphosphate. Is required not only for elongation of protein synthesis but also for the initiation of all mRNA translation through initiator tRNA(fMet) aminoacylation. The protein is Methionine--tRNA ligase of Bacillus cereus (strain 03BB102).